Consider the following 875-residue polypeptide: Alanine--tRNA ligase (875 aa).

Zn(2+) is bound by residues histidine 564, histidine 568, cysteine 666, and histidine 670.

This sequence belongs to the class-II aminoacyl-tRNA synthetase family. As to quaternary structure, homotetramer. Requires Zn(2+) as cofactor.

It is found in the cytoplasm. The catalysed reaction is tRNA(Ala) + L-alanine + ATP = L-alanyl-tRNA(Ala) + AMP + diphosphate. Its function is as follows. Catalyzes the attachment of alanine to tRNA(Ala) in a two-step reaction: alanine is first activated by ATP to form Ala-AMP and then transferred to the acceptor end of tRNA(Ala). Also edits incorrectly charged Ser-tRNA(Ala) and Gly-tRNA(Ala) via its editing domain. This is Alanine--tRNA ligase from Sodalis glossinidius (strain morsitans).